Reading from the N-terminus, the 147-residue chain is MMVSRLLKNYSLYFAWLTALIATLGSLYLSLVRHIPVCDLCWYQRVCIYPLTILLGIAAYRTDRGVVKYALPLVVLGFLFSVYQYLQQMIPGFAPINLCGSTSPHCSEIHWEIFGFITLPFLGMLATLIMSFFLIMAFYSLDKRLAN.

Residues 9-28 (NYSLYFAWLTALIATLGSLY) traverse the membrane as a helical segment. A disulfide bridge links cysteine 38 with cysteine 41. The next 2 helical transmembrane spans lie at 43 to 62 (YQRV…AYRT) and 69 to 86 (YALP…YQYL). The cysteines at positions 99 and 106 are disulfide-linked. Residues 115–138 (GFITLPFLGMLATLIMSFFLIMAF) form a helical membrane-spanning segment.

This sequence belongs to the DsbB family. BdbC subfamily.

It is found in the cell inner membrane. In terms of biological role, required for disulfide bond formation in some proteins. The protein is Probable disulfide formation protein of Coxiella burnetii (strain CbuG_Q212) (Coxiella burnetii (strain Q212)).